A 436-amino-acid polypeptide reads, in one-letter code: GTPase Der (436 aa).

EngA-type G domains are found at residues 4-167 (PTIA…PNEE) and 175-351 (IKFS…QSQN). Residues 10 to 17 (GRPNVGKS), 57 to 61 (DTGGI), 119 to 122 (NKVD), 181 to 188 (GRPNVGKS), 229 to 233 (DTAGM), and 294 to 297 (NKWD) contribute to the GTP site. The region spanning 352-436 (TRIPSAVLND…PIHLIARKRK (85 aa)) is the KH-like domain.

This sequence belongs to the TRAFAC class TrmE-Era-EngA-EngB-Septin-like GTPase superfamily. EngA (Der) GTPase family. In terms of assembly, associates with the 50S ribosomal subunit.

In terms of biological role, GTPase that plays an essential role in the late steps of ribosome biogenesis. The polypeptide is GTPase Der (Streptococcus gordonii (strain Challis / ATCC 35105 / BCRC 15272 / CH1 / DL1 / V288)).